The chain runs to 647 residues: Threonine--tRNA ligase (647 aa).

The TGS domain occupies 1-61; that stretch reads MINITFPDGA…TEDGSIEIVT (61 aa). Positions 242 to 540 are catalytic; that stretch reads DHRKLGKELD…LIENYKGAFP (299 aa). The Zn(2+) site is built by Cys336, His387, and His517.

This sequence belongs to the class-II aminoacyl-tRNA synthetase family. As to quaternary structure, homodimer. Zn(2+) serves as cofactor.

The protein localises to the cytoplasm. The enzyme catalyses tRNA(Thr) + L-threonine + ATP = L-threonyl-tRNA(Thr) + AMP + diphosphate + H(+). Its function is as follows. Catalyzes the attachment of threonine to tRNA(Thr) in a two-step reaction: L-threonine is first activated by ATP to form Thr-AMP and then transferred to the acceptor end of tRNA(Thr). Also edits incorrectly charged L-seryl-tRNA(Thr). This Streptococcus pneumoniae (strain JJA) protein is Threonine--tRNA ligase.